We begin with the raw amino-acid sequence, 1441 residues long: Remodeling and spacing factor 1 (1441 aa).

The DDT domain occupies 17–84 (PGSCPNFAVV…MRKIGKSVTA (68 aa)). Glycyl lysine isopeptide (Lys-Gly) (interchain with G-Cter in SUMO2) cross-links involve residues Lys136 and Lys215. A compositionally biased stretch (polar residues) spans 215–227 (KNSSQQDNSSRES). A disordered region spans residues 215 to 283 (KNSSQQDNSS…TTVKKEKEDE (69 aa)). Phosphoserine is present on Ser227. 2 stretches are compositionally biased toward basic and acidic residues: residues 234 to 257 (ETKK…KSEE) and 274 to 283 (TTVKKEKEDE). Glycyl lysine isopeptide (Lys-Gly) (interchain with G-Cter in SUMO2) cross-links involve residues Lys236, Lys243, Lys248, Lys252, and Lys254. A Glycyl lysine isopeptide (Lys-Gly) (interchain with G-Cter in SUMO1); alternate cross-link involves residue Lys277. Lys277 is covalently cross-linked (Glycyl lysine isopeptide (Lys-Gly) (interchain with G-Cter in SUMO2); alternate). Residues Lys284, Lys288, Lys294, Lys305, Lys306, Lys309, Lys323, Lys327, Lys337, Lys342, Lys358, Lys373, Lys381, and Lys390 each participate in a glycyl lysine isopeptide (Lys-Gly) (interchain with G-Cter in SUMO2) cross-link. Residues 330-340 (RADPKDTKSSM) show a composition bias toward basic and acidic residues. A disordered region spans residues 330-385 (RADPKDTKSSMEKPVAQEPERIEFGGNIKSSHEITEKSTEETEKLKNDQQAKIPLK). Basic and acidic residues predominate over residues 359-378 (SSHEITEKSTEETEKLKNDQ). Residues Ser392 and Ser397 each carry the phosphoserine modification. Glycyl lysine isopeptide (Lys-Gly) (interchain with G-Cter in SUMO2) cross-links involve residues Lys400, Lys405, Lys415, and Lys419. The residue at position 429 (Ser429) is a Phosphoserine. Lys439 is covalently cross-linked (Glycyl lysine isopeptide (Lys-Gly) (interchain with G-Cter in SUMO2)). Residue Lys456 forms a Glycyl lysine isopeptide (Lys-Gly) (interchain with G-Cter in SUMO1); alternate linkage. Lys456 is covalently cross-linked (Glycyl lysine isopeptide (Lys-Gly) (interchain with G-Cter in SUMO2); alternate). Residues Lys463 and Lys468 each participate in a glycyl lysine isopeptide (Lys-Gly) (interchain with G-Cter in SUMO2) cross-link. Positions 467–480 (TKEESYSPSKDRNI) are enriched in basic and acidic residues. Positions 467–634 (TKEESYSPSK…AAETSPPSNI (168 aa)) are disordered. Position 473 is a phosphoserine (Ser473). Over residues 482-498 (TEGNGTESLNSVITSMK) the composition is skewed to polar residues. A Glycyl lysine isopeptide (Lys-Gly) (interchain with G-Cter in SUMO2) cross-link involves residue Lys498. Over residues 500–514 (GELEKETAPLRKDAD) the composition is skewed to basic and acidic residues. Position 524 is a phosphoserine (Ser524). Positions 552–562 (SKTALSSTESC) are enriched in polar residues. Lys565 participates in a covalent cross-link: Glycyl lysine isopeptide (Lys-Gly) (interchain with G-Cter in SUMO2). Positions 565-601 (KGEEKSPKTKKDKRPPILECLEKLEKSKKTFLDKDAQ) are enriched in basic and acidic residues. Phosphoserine is present on residues Ser570 and Ser604. The segment covering 609–621 (EVPKSTLESEKPG) has biased composition (basic and acidic residues). Ser622 carries the post-translational modification Phosphoserine. Thr628 is modified (phosphothreonine). Ser629 is modified (phosphoserine). Glycyl lysine isopeptide (Lys-Gly) (interchain with G-Cter in SUMO2) cross-links involve residues Lys662, Lys663, Lys670, Lys677, Lys698, and Lys709. A disordered region spans residues 675–887 (FTKVEMDNLD…EEKESEEAIL (213 aa)). Residue Ser748 is modified to Phosphoserine. 3 stretches are compositionally biased toward basic and acidic residues: residues 753–770 (LEPE…EKTN), 789–802 (AEIR…KRGE), and 816–831 (KTDK…KDTN). Residues Lys758, Lys768, Lys795, and Lys799 each participate in a glycyl lysine isopeptide (Lys-Gly) (interchain with G-Cter in SUMO2) cross-link. A compositionally biased stretch (low complexity) spans 864 to 873 (GSGSEKSSAA). Residues 874–887 (SEEEEEKESEEAIL) are compositionally biased toward acidic residues. Ser882 is modified (phosphoserine). A PHD-type zinc finger spans residues 891 to 941 (DEPCKKCGLPNHPELILLCDSCDSGYHTACLRPPLMIIPDGEWFCPPCQHK). A coiled-coil region spans residues 942–1012 (LLCEKLEEQL…SKANLLERRS (71 aa)). The interval 983–1007 (PPQEPDFSEDQEEKKKDSKKSKANL) is disordered. Lys1039 participates in a covalent cross-link: Glycyl lysine isopeptide (Lys-Gly) (interchain with G-Cter in SUMO2). Position 1050 is an N6-acetyllysine (Lys1050). Residues 1063–1428 (ISTILDEERK…EEEEDELLRV (366 aa)) form a disordered region. Acidic residues-rich tracts occupy residues 1094 to 1107 (LDSD…ESED) and 1120 to 1141 (VVSD…DSDT). Phosphoserine occurs at positions 1096, 1098, and 1105. Positions 1146–1169 (RRLRRHPSRPMRQSRRLRRKTPKK) are enriched in basic residues. A compositionally biased stretch (acidic residues) spans 1189–1199 (SDFSDDFSDDF). Basic residues predominate over residues 1203-1212 (RRRRSRRNQK). Ser1221, Ser1223, and Ser1226 each carry phosphoserine. Over residues 1229 to 1244 (SLRRGKEIRRVHKRRL) the composition is skewed to basic residues. Phosphoserine occurs at positions 1258 and 1277. Thr1278 is subject to Phosphothreonine. The segment covering 1280-1292 (EYSEADEEEEEEE) has biased composition (acidic residues). Thr1305 carries the post-translational modification Phosphothreonine. Residues Ser1325 and Ser1336 each carry the phosphoserine modification. Residues 1335 to 1344 (ESTKKPYRIE) are compositionally biased toward basic and acidic residues. N6-acetyllysine is present on Lys1339. A phosphoserine mark is found at Ser1345, Ser1359, and Ser1375. Positions 1394–1408 (PKDNSTASASLASNG) are enriched in polar residues.

As to quaternary structure, component of the RSF-1 ISWI chromatin-remodeling complex at least composed of SMARCA1 and RSF1. Within the RSF-1 ISWI chromatin-remodeling complex interacts with SMARCA1. Component of the RSF-5 ISWI chromatin-remodeling complex (also called the RSF complex) at least composed of SMARCA5/SNF2H and RSF1. Within the RSF-5 ISWI chromatin-remodeling complex interacts with SMARCA5/SNF2H; the interaction is direct. Identified in a centromere complex containing histones H2A, H2B and H4, and at least CENPA, CENPB, CENPC, CENPT, CENPN, HJURP, SUPT16H, SSRP1 and RSF1. Also binds the HBV pX/HBx protein, which is required to activate transcription of the viral genome. In terms of processing, phosphorylated. In terms of tissue distribution, ubiquitously expressed. Highly expressed in the heart, skeletal muscle, kidney and placenta. Expressed at low levels in the brain and colon.

It localises to the nucleus. Its function is as follows. Regulatory subunit of the ATP-dependent RSF-1 and RSF-5 ISWI chromatin-remodeling complexes, which form ordered nucleosome arrays on chromatin and facilitate access to DNA during DNA-templated processes such as DNA replication, transcription, and repair. Binds to core histones together with SMARCA5, and is required for the assembly of regular nucleosome arrays by the RSF-5 ISWI chromatin-remodeling complex. Directly stimulates the ATPase activity of SMARCA1 and SMARCA5 in the RSF-1 and RSF-5 ISWI chromatin-remodeling complexes, respectively. The RSF-1 ISWI chromatin remodeling complex has a lower ATP hydrolysis rate than the RSF-5 ISWI chromatin-remodeling complex. The complexes do not have the ability to slide mononucleosomes to the center of a DNA template. Facilitates transcription of hepatitis B virus (HBV) genes by the pX transcription activator. In case of infection by HBV, together with pX, it represses TNF-alpha induced NF-kappa-B transcription activation. Represses transcription when artificially recruited to chromatin by fusion to a heterogeneous DNA binding domain. This chain is Remodeling and spacing factor 1 (RSF1), found in Homo sapiens (Human).